The following is a 406-amino-acid chain: 8-amino-7-oxononanoate synthase (406 aa).

Arg20 provides a ligand contact to substrate. 116–117 provides a ligand contact to pyridoxal 5'-phosphate; it reads GY. His141 is a binding site for substrate. The pyridoxal 5'-phosphate site is built by Ser187, His215, and Thr243. At Lys246 the chain carries N6-(pyridoxal phosphate)lysine. Thr366 contributes to the substrate binding site.

This sequence belongs to the class-II pyridoxal-phosphate-dependent aminotransferase family. BioF subfamily. Homodimer. The cofactor is pyridoxal 5'-phosphate.

The catalysed reaction is 6-carboxyhexanoyl-[ACP] + L-alanine + H(+) = (8S)-8-amino-7-oxononanoate + holo-[ACP] + CO2. It participates in cofactor biosynthesis; biotin biosynthesis. Its function is as follows. Catalyzes the decarboxylative condensation of pimeloyl-[acyl-carrier protein] and L-alanine to produce 8-amino-7-oxononanoate (AON), [acyl-carrier protein], and carbon dioxide. The chain is 8-amino-7-oxononanoate synthase from Cupriavidus metallidurans (strain ATCC 43123 / DSM 2839 / NBRC 102507 / CH34) (Ralstonia metallidurans).